The chain runs to 156 residues: Small ribosomal subunit protein uS7 (156 aa).

Belongs to the universal ribosomal protein uS7 family. In terms of assembly, part of the 30S ribosomal subunit. Contacts proteins S9 and S11.

In terms of biological role, one of the primary rRNA binding proteins, it binds directly to 16S rRNA where it nucleates assembly of the head domain of the 30S subunit. Is located at the subunit interface close to the decoding center, probably blocks exit of the E-site tRNA. This Nitratidesulfovibrio vulgaris (strain ATCC 29579 / DSM 644 / CCUG 34227 / NCIMB 8303 / VKM B-1760 / Hildenborough) (Desulfovibrio vulgaris) protein is Small ribosomal subunit protein uS7.